Reading from the N-terminus, the 439-residue chain is 3-phosphoshikimate 1-carboxyvinyltransferase (439 aa).

3-phosphoshikimate contacts are provided by Lys27, Ser28, and Arg32. Lys27 serves as a coordination point for phosphoenolpyruvate. Positions 101 and 130 each coordinate phosphoenolpyruvate. Positions 175, 177, 326, and 353 each coordinate 3-phosphoshikimate. Gln177 is a binding site for phosphoenolpyruvate. Asp326 serves as the catalytic Proton acceptor. The phosphoenolpyruvate site is built by Arg357 and Arg399.

Belongs to the EPSP synthase family. Monomer.

It localises to the cytoplasm. It catalyses the reaction 3-phosphoshikimate + phosphoenolpyruvate = 5-O-(1-carboxyvinyl)-3-phosphoshikimate + phosphate. Its pathway is metabolic intermediate biosynthesis; chorismate biosynthesis; chorismate from D-erythrose 4-phosphate and phosphoenolpyruvate: step 6/7. Catalyzes the transfer of the enolpyruvyl moiety of phosphoenolpyruvate (PEP) to the 5-hydroxyl of shikimate-3-phosphate (S3P) to produce enolpyruvyl shikimate-3-phosphate and inorganic phosphate. This chain is 3-phosphoshikimate 1-carboxyvinyltransferase, found in Synechococcus sp. (strain WH7803).